The sequence spans 219 residues: Inner membrane protein YghB (219 aa).

Topologically, residues 1 to 17 (MAVIQDIIAALWQHDFA) are cytoplasmic. A helical membrane pass occupies residues 18 to 38 (ALADPHIVSVVYFVMFATLFL). Over 39–67 (ENGLLPASFLPGDSLLILAGALIAQGVMD) the chain is Periplasmic. The helical transmembrane segment at 68–88 (FLPTIAILTAAASLGCWLSYI) threads the bilayer. Residues 89-160 (QGRWLGNTKT…RRFQFFNWLS (72 aa)) are Cytoplasmic-facing. A helical transmembrane segment spans residues 161-181 (GLLWVSVVTSFGYALSMIPFV). The Periplasmic portion of the chain corresponds to 182-191 (KRHEDQVMTF). The helical transmembrane segment at 192-212 (LMILPIALLTAGLLGTLFVVI) threads the bilayer. The Cytoplasmic portion of the chain corresponds to 213-219 (KKKYCNA).

Belongs to the DedA family.

Its subcellular location is the cell inner membrane. The chain is Inner membrane protein YghB (yghB) from Escherichia coli O6:H1 (strain CFT073 / ATCC 700928 / UPEC).